A 239-amino-acid polypeptide reads, in one-letter code: Probable transcriptional regulatory protein Bcer98_0465 (239 aa).

This sequence belongs to the TACO1 family. YeeN subfamily.

It localises to the cytoplasm. This Bacillus cytotoxicus (strain DSM 22905 / CIP 110041 / 391-98 / NVH 391-98) protein is Probable transcriptional regulatory protein Bcer98_0465.